The sequence spans 346 residues: Syntaxin UFE1 (346 aa).

At 1–324 the chain is on the cytoplasmic side; it reads MMSDLTPIFR…RKAKRAAGRT (324 aa). The region spanning 255–317 is the t-SNARE coiled-coil homology domain; sequence LNQKNEQLKK…KKGNKELRKA (63 aa). Residues 325–342 form a helical; Anchor for type IV membrane protein membrane-spanning segment; that stretch reads AKMTTYGAIIMGVFILFL. At 343-346 the chain is on the lumenal side; the sequence is DYVG.

Belongs to the syntaxin family. As to quaternary structure, component of a SNARE complex consisting of UFE1, USE1, SEC20 and SEC22 or YKT6.

It localises to the endoplasmic reticulum membrane. Syntaxin required for targeting and fusion of Golgi-derived retrograde transport vesicles with the ER. The sequence is that of Syntaxin UFE1 (UFE1) from Saccharomyces cerevisiae (strain ATCC 204508 / S288c) (Baker's yeast).